We begin with the raw amino-acid sequence, 344 residues long: Beta-1,4-galactosyltransferase 4 (344 aa).

Residues 1–12 (MGCNPPYLLSYR) lie on the Cytoplasmic side of the membrane. A helical; Signal-anchor for type II membrane protein membrane pass occupies residues 13-38 (LRLLLLFTLCLTVLGWATSNYFVGAI). At 39 to 344 (QVIPRAKNFM…NITVDFWTAA (306 aa)) the chain is on the lumenal side. C77 and C118 form a disulfide bridge. UDP-alpha-D-galactose-binding positions include 129-133 (PHRNR), 168-170 (FNR), and 195-196 (VD). An intrachain disulfide couples C189 to C208. D196 serves as a coordination point for Mn(2+). N220 carries an N-linked (GlcNAc...) asparagine glycan. Positions 224 and 256 each coordinate UDP-alpha-D-galactose. 258–261 (GEDD) is a binding site for N-acetyl-D-glucosamine. H289 is a binding site for Mn(2+). Residue 289-291 (HTR) coordinates UDP-alpha-D-galactose. R301 is an N-acetyl-D-glucosamine binding site. A glycan (N-linked (GlcNAc...) asparagine) is linked at N335.

It belongs to the glycosyltransferase 7 family. As to quaternary structure, interacts with SLC35A2/UGT1. It depends on Mn(2+) as a cofactor.

The protein localises to the golgi apparatus membrane. Its subcellular location is the secreted. It catalyses the reaction N-acetyl-D-glucosamine + UDP-alpha-D-galactose = beta-D-galactosyl-(1-&gt;4)-N-acetyl-D-glucosamine + UDP + H(+). The catalysed reaction is a beta-D-GlcNAc-(1-&gt;3)-beta-D-Gal-(1-&gt;4)-beta-D-Glc-(1&lt;-&gt;1)-Cer(d18:1(4E)) + UDP-alpha-D-galactose = a neolactoside nLc4Cer(d18:1(4E)) + UDP + H(+). It carries out the reaction 3-O-{beta-D-galactosyl-(1-&gt;3)-[6-O-sulfo-N-acetyl-beta-D-glucosaminyl-(1-&gt;6)]-N-acetyl-alpha-D-galactosaminyl}-L-seryl-[protein] + UDP-alpha-D-galactose = 3-O-{beta-D-galactosyl-(1-&gt;3)-[beta-D-galactosyl-(1-&gt;4)-6-O-sulfo-N-acetyl-beta-D-glucosaminyl-(1-&gt;6)]-N-acetyl-alpha-D-galactosaminyl}-L-seryl-[protein] + UDP + H(+). The enzyme catalyses 3-O-{beta-D-galactosyl-(1-&gt;3)-[6-O-sulfo-N-acetyl-beta-D-glucosaminyl-(1-&gt;6)]-N-acetyl-alpha-D-galactosaminyl}-L-threonyl-[protein] + UDP-alpha-D-galactose = 3-O-{beta-D-galactosyl-(1-&gt;3)-[beta-D-galactosyl-(1-&gt;4)-6-O-sulfo-N-acetyl-beta-D-glucosaminyl-(1-&gt;6)]-N-acetyl-alpha-D-galactosaminyl}-L-threonyl-[protein] + UDP + H(+). It functions in the pathway protein modification; protein glycosylation. Its pathway is glycolipid biosynthesis. Galactose (Gal) transferase involved in the synthesis of terminal N-acetyllactosamine (LacNac) unit present on glycan chains of glycoproteins and glycosphingolipids. Catalyzes the transfer of Gal residue via a beta1-&gt;4 linkage from UDP-Gal to the non-reducing terminal N-acetyl glucosamine 6-O-sulfate (6-O-sulfoGlcNAc) in the linearly growing chain of both N- and O-linked keratan sulfate proteoglycans. Cooperates with B3GNT7 N-acetyl glucosamine transferase and CHST6 and CHST1 sulfotransferases to construct and elongate mono- and disulfated disaccharide units [-&gt;3Galbeta1-&gt;4(6-sulfoGlcNAcbeta)1-&gt;] and [-&gt;3(6-sulfoGalbeta)1-&gt;4(6-sulfoGlcNAcbeta)1-&gt;] within keratan sulfate polymer. Transfers Gal residue via a beta1-&gt;4 linkage to terminal 6-O-sulfoGlcNAc within the LacNac unit of core 2 O-glycans forming 6-sulfo-sialyl-Lewis X (sLex). May contribute to the generation of sLex epitope on mucin-type glycoproteins that serve as ligands for SELL/L-selectin, a major regulator of leukocyte migration. In the biosynthesis pathway of neolacto-series glycosphingolipids, transfers Gal residue via a beta1-&gt;4 linkage to terminal GlcNAc of a lactotriaosylceramide (Lc3Cer) acceptor to form a neolactotetraosylceramide. The chain is Beta-1,4-galactosyltransferase 4 (B4galt4) from Rattus norvegicus (Rat).